The chain runs to 514 residues: Type-2 serine--tRNA ligase (514 aa).

Ala-313 lines the L-serine pocket. Position 315 (Cys-315) interacts with Zn(2+). Arg-344 serves as a coordination point for L-serine. ATP-binding positions include 344–346 (RWE) and 355–356 (RV). 361–363 (RGE) serves as a coordination point for L-serine. Glu-363 and Cys-470 together coordinate Zn(2+). Arg-477 is an ATP binding site.

This sequence belongs to the class-II aminoacyl-tRNA synthetase family. Type-2 seryl-tRNA synthetase subfamily. In terms of assembly, homodimer. Requires Zn(2+) as cofactor.

The protein resides in the cytoplasm. It catalyses the reaction tRNA(Ser) + L-serine + ATP = L-seryl-tRNA(Ser) + AMP + diphosphate + H(+). It carries out the reaction tRNA(Sec) + L-serine + ATP = L-seryl-tRNA(Sec) + AMP + diphosphate + H(+). It functions in the pathway aminoacyl-tRNA biosynthesis; selenocysteinyl-tRNA(Sec) biosynthesis; L-seryl-tRNA(Sec) from L-serine and tRNA(Sec): step 1/1. Its function is as follows. Catalyzes the attachment of serine to tRNA(Ser). Is also able to aminoacylate tRNA(Sec) with serine, to form the misacylated tRNA L-seryl-tRNA(Sec), which will be further converted into selenocysteinyl-tRNA(Sec). The sequence is that of Type-2 serine--tRNA ligase from Methanococcus maripaludis (strain C5 / ATCC BAA-1333).